A 352-amino-acid chain; its full sequence is Pyruvate dehydrogenase E1 component subunit beta, mitochondrial (352 aa).

The transit peptide at methionine 1–alanine 21 directs the protein to the mitochondrion. Residue glutamate 81 coordinates thiamine diphosphate. The K(+) site is built by isoleucine 134, alanine 182, isoleucine 183, aspartate 185, and asparagine 187.

As to quaternary structure, tetramer of 2 alpha and 2 beta subunits. It depends on thiamine diphosphate as a cofactor.

It is found in the mitochondrion matrix. It catalyses the reaction N(6)-[(R)-lipoyl]-L-lysyl-[protein] + pyruvate + H(+) = N(6)-[(R)-S(8)-acetyldihydrolipoyl]-L-lysyl-[protein] + CO2. Its function is as follows. The pyruvate dehydrogenase complex catalyzes the overall conversion of pyruvate to acetyl-CoA and CO(2). It contains multiple copies of three enzymatic components: pyruvate dehydrogenase (E1), dihydrolipoamide acetyltransferase (E2) and lipoamide dehydrogenase (E3). This chain is Pyruvate dehydrogenase E1 component subunit beta, mitochondrial (pdhb-1), found in Caenorhabditis elegans.